The sequence spans 201 residues: Acyl-homoserine-lactone synthase (201 aa).

This sequence belongs to the autoinducer synthase family.

It catalyses the reaction a fatty acyl-[ACP] + S-adenosyl-L-methionine = an N-acyl-L-homoserine lactone + S-methyl-5'-thioadenosine + holo-[ACP] + H(+). Its function is as follows. Required for the synthesis of BHL (N-butanoyl-L-homoserine lactone), and HHL (N-hexanoyl-L-homoserine lactone) autoinducer molecules which bind to RhlR and thus acts in elastase biosynthesis regulation. The chain is Acyl-homoserine-lactone synthase (rhlI) from Pseudomonas aeruginosa (strain ATCC 15692 / DSM 22644 / CIP 104116 / JCM 14847 / LMG 12228 / 1C / PRS 101 / PAO1).